Reading from the N-terminus, the 144-residue chain is MAFEMRPEWKKFRYRGRTLEELLKMDIEELARLFPARQRRSLLRGLTPAQQKLLLKVRKIRRRLEEGRLKRPPVIRTHVRDMVILPEMVGLTIAVYNGKEFIPVKIVPEMIGHYLGEFSPTTRIVQHGEPGLKATRSSLHVASK.

The protein belongs to the universal ribosomal protein uS19 family.

Functionally, protein S19 forms a complex with S13 that binds strongly to the 16S ribosomal RNA. The sequence is that of Small ribosomal subunit protein uS19 (rps19) from Aeropyrum pernix (strain ATCC 700893 / DSM 11879 / JCM 9820 / NBRC 100138 / K1).